The chain runs to 106 residues: Iron-sulfur cluster assembly protein CyaY (106 aa).

Belongs to the frataxin family.

Functionally, involved in iron-sulfur (Fe-S) cluster assembly. May act as a regulator of Fe-S biogenesis. In Yersinia enterocolitica serotype O:8 / biotype 1B (strain NCTC 13174 / 8081), this protein is Iron-sulfur cluster assembly protein CyaY.